Here is a 504-residue protein sequence, read N- to C-terminus: Histidine ammonia-lyase (504 aa).

Residues 141–143 (ASG) constitute a cross-link (5-imidazolinone (Ala-Gly)). At serine 142 the chain carries 2,3-didehydroalanine (Ser).

The protein belongs to the PAL/histidase family. Contains an active site 4-methylidene-imidazol-5-one (MIO), which is formed autocatalytically by cyclization and dehydration of residues Ala-Ser-Gly.

Its subcellular location is the cytoplasm. The enzyme catalyses L-histidine = trans-urocanate + NH4(+). The protein operates within amino-acid degradation; L-histidine degradation into L-glutamate; N-formimidoyl-L-glutamate from L-histidine: step 1/3. In Geobacillus thermodenitrificans (strain NG80-2), this protein is Histidine ammonia-lyase.